Consider the following 151-residue polypeptide: Ribosome maturation factor RimP (151 aa).

Belongs to the RimP family.

The protein localises to the cytoplasm. Its function is as follows. Required for maturation of 30S ribosomal subunits. The polypeptide is Ribosome maturation factor RimP (Haemophilus influenzae (strain 86-028NP)).